Reading from the N-terminus, the 159-residue chain is MDATFWAFIALVIFVAIVVYMKVPGMIGRTLDERADRIKKELEEARTLREEAQQLLAEYHRKRKEAEKEAGDIVASAEREAKALLEEAKRATEEYVARRNKLAEQKIATAETDAINAVRASAVDLAVAAAGSILAEKVDAKAAGNLFNDALAQVKSHLN.

A helical membrane pass occupies residues 1–21; sequence MDATFWAFIALVIFVAIVVYM.

This sequence belongs to the ATPase B chain family. As to quaternary structure, F-type ATPases have 2 components, F(1) - the catalytic core - and F(0) - the membrane proton channel. F(1) has five subunits: alpha(3), beta(3), gamma(1), delta(1), epsilon(1). F(0) has three main subunits: a(1), b(2) and c(10-14). The alpha and beta chains form an alternating ring which encloses part of the gamma chain. F(1) is attached to F(0) by a central stalk formed by the gamma and epsilon chains, while a peripheral stalk is formed by the delta and b chains.

The protein localises to the cell inner membrane. Its function is as follows. F(1)F(0) ATP synthase produces ATP from ADP in the presence of a proton or sodium gradient. F-type ATPases consist of two structural domains, F(1) containing the extramembraneous catalytic core and F(0) containing the membrane proton channel, linked together by a central stalk and a peripheral stalk. During catalysis, ATP synthesis in the catalytic domain of F(1) is coupled via a rotary mechanism of the central stalk subunits to proton translocation. Functionally, component of the F(0) channel, it forms part of the peripheral stalk, linking F(1) to F(0). In Brucella suis (strain ATCC 23445 / NCTC 10510), this protein is ATP synthase subunit b 2.